The primary structure comprises 282 residues: Bifunctional protein FolD (282 aa).

Residues 165-167, Ser190, and Ile231 each bind NADP(+); that span reads NRS.

Belongs to the tetrahydrofolate dehydrogenase/cyclohydrolase family. In terms of assembly, homodimer.

It catalyses the reaction (6R)-5,10-methylene-5,6,7,8-tetrahydrofolate + NADP(+) = (6R)-5,10-methenyltetrahydrofolate + NADPH. The enzyme catalyses (6R)-5,10-methenyltetrahydrofolate + H2O = (6R)-10-formyltetrahydrofolate + H(+). Its pathway is one-carbon metabolism; tetrahydrofolate interconversion. Its function is as follows. Catalyzes the oxidation of 5,10-methylenetetrahydrofolate to 5,10-methenyltetrahydrofolate and then the hydrolysis of 5,10-methenyltetrahydrofolate to 10-formyltetrahydrofolate. In Clostridium botulinum (strain 657 / Type Ba4), this protein is Bifunctional protein FolD.